The chain runs to 707 residues: D-(-)-3-hydroxybutyrate oligomer hydrolase (707 aa).

The first 24 residues, 1–24 (MHHDNFRRLGNAAFAAAAALLAVA), serve as a signal peptide directing secretion. Serine 311 serves as the catalytic Charge relay system.

The protein belongs to the D-(-)-3-hydroxybutyrate oligomer hydrolase family.

Its subcellular location is the secreted. The catalysed reaction is (3R)-hydroxybutanoate dimer + H2O = 2 (R)-3-hydroxybutanoate + H(+). It participates in lipid metabolism; butanoate metabolism. Participates in the degradation of poly-3-hydroxybutyrate (PHB). It works downstream of poly(3-hydroxybutyrate) depolymerase, hydrolyzing D(-)-3-hydroxybutyrate oligomers of various length (3HB-oligomers) into 3HB-monomers. The protein is D-(-)-3-hydroxybutyrate oligomer hydrolase of Cupriavidus pinatubonensis (strain JMP 134 / LMG 1197) (Cupriavidus necator (strain JMP 134)).